Consider the following 75-residue polypeptide: MAGQEDPVQREIHQDWANREYIEVITSSIKKIADFLNSFDMSCRSRLATLNEKLTALERRIEYIEARVTKGETLT.

The stretch at 41 to 72 forms a coiled coil; it reads MSCRSRLATLNEKLTALERRIEYIEARVTKGE.

The protein belongs to the BRK1 family.

Its subcellular location is the cytoplasm. It localises to the cytoskeleton. Involved in regulation of actin and microtubule organization. Part of a WAVE complex that activates the Arp2/3 complex. In Danio rerio (Zebrafish), this protein is Probable protein BRICK1 (brk1).